We begin with the raw amino-acid sequence, 423 residues long: GTPase Obg (423 aa).

Residues 1-158 (MFIDTARIYI…MWVRLELKLL (158 aa)) enclose the Obg domain. An OBG-type G domain is found at 159–329 (ADVGLIGFPN…LLDKTIEILS (171 aa)). Residues 165–172 (GFPNAGKS), 190–194 (FTTLT), 211–214 (DIPG), 281–284 (NKID), and 310–312 (SAL) each bind GTP. S172 and T192 together coordinate Mg(2+). Residues 346-423 (TPPEEEETLN…VRDFEFEYYE (78 aa)) form the OCT domain.

The protein belongs to the TRAFAC class OBG-HflX-like GTPase superfamily. OBG GTPase family. As to quaternary structure, monomer. Mg(2+) is required as a cofactor.

The protein localises to the cytoplasm. In terms of biological role, an essential GTPase which binds GTP, GDP and possibly (p)ppGpp with moderate affinity, with high nucleotide exchange rates and a fairly low GTP hydrolysis rate. Plays a role in control of the cell cycle, stress response, ribosome biogenesis and in those bacteria that undergo differentiation, in morphogenesis control. This Thermoanaerobacter pseudethanolicus (strain ATCC 33223 / 39E) (Clostridium thermohydrosulfuricum) protein is GTPase Obg.